The sequence spans 350 residues: tRNA dimethylallyltransferase (350 aa).

An ATP-binding site is contributed by 34-41; it reads GPTASGKT. 36–41 contacts substrate; sequence TASGKT. Interaction with substrate tRNA regions lie at residues 63 to 66, 187 to 191, and 274 to 279; these read DSAL, QRIQR, and RCVGYR.

This sequence belongs to the IPP transferase family. As to quaternary structure, monomer. The cofactor is Mg(2+).

It carries out the reaction adenosine(37) in tRNA + dimethylallyl diphosphate = N(6)-dimethylallyladenosine(37) in tRNA + diphosphate. Catalyzes the transfer of a dimethylallyl group onto the adenine at position 37 in tRNAs that read codons beginning with uridine, leading to the formation of N6-(dimethylallyl)adenosine (i(6)A). The sequence is that of tRNA dimethylallyltransferase from Paracidovorax citrulli (strain AAC00-1) (Acidovorax citrulli).